Here is a 123-residue protein sequence, read N- to C-terminus: Large ribosomal subunit protein uL14c (123 aa).

Belongs to the universal ribosomal protein uL14 family. Part of the 50S ribosomal subunit.

The protein resides in the plastid. The protein localises to the chloroplast. Its function is as follows. Binds to 23S rRNA. This is Large ribosomal subunit protein uL14c from Sorghum bicolor (Sorghum).